We begin with the raw amino-acid sequence, 136 residues long: Large ribosomal subunit protein uL16 (136 aa).

Residues 1-17 (MLQPKRTKFRKRHKGRN) show a composition bias toward basic residues. Residues 1 to 21 (MLQPKRTKFRKRHKGRNRGLA) are disordered.

This sequence belongs to the universal ribosomal protein uL16 family. In terms of assembly, part of the 50S ribosomal subunit.

Binds 23S rRNA and is also seen to make contacts with the A and possibly P site tRNAs. The sequence is that of Large ribosomal subunit protein uL16 from Buchnera aphidicola subsp. Acyrthosiphon kondoi (Acyrthosiphon kondoi symbiotic bacterium).